A 367-amino-acid polypeptide reads, in one-letter code: DNA replication and repair protein RecF (367 aa).

Position 30-37 (30-37 (GENAQGKT)) interacts with ATP.

It belongs to the RecF family.

The protein resides in the cytoplasm. The RecF protein is involved in DNA metabolism; it is required for DNA replication and normal SOS inducibility. RecF binds preferentially to single-stranded, linear DNA. It also seems to bind ATP. In Chlamydia caviae (strain ATCC VR-813 / DSM 19441 / 03DC25 / GPIC) (Chlamydophila caviae), this protein is DNA replication and repair protein RecF.